A 368-amino-acid polypeptide reads, in one-letter code: DNA-directed RNA polymerase subunit alpha (368 aa).

The segment at 1–231 (MLWKGFQKPK…DHMNIFINFE (231 aa)) is alpha N-terminal domain (alpha-NTD). The interval 243-368 (KPEIRNENLN…GFGGDNNPGF (126 aa)) is alpha C-terminal domain (alpha-CTD).

This sequence belongs to the RNA polymerase alpha chain family. Homodimer. The RNAP catalytic core consists of 2 alpha, 1 beta, 1 beta' and 1 omega subunit. When a sigma factor is associated with the core the holoenzyme is formed, which can initiate transcription.

It catalyses the reaction RNA(n) + a ribonucleoside 5'-triphosphate = RNA(n+1) + diphosphate. DNA-dependent RNA polymerase catalyzes the transcription of DNA into RNA using the four ribonucleoside triphosphates as substrates. The sequence is that of DNA-directed RNA polymerase subunit alpha from Koribacter versatilis (strain Ellin345).